We begin with the raw amino-acid sequence, 362 residues long: Methylthioribose-1-phosphate isomerase (362 aa).

Substrate is bound by residues 53–55, arginine 90, and glutamine 201; that span reads RGA. Aspartate 242 acts as the Proton donor in catalysis. 252 to 253 contacts substrate; the sequence is NK.

This sequence belongs to the eIF-2B alpha/beta/delta subunits family. MtnA subfamily.

The catalysed reaction is 5-(methylsulfanyl)-alpha-D-ribose 1-phosphate = 5-(methylsulfanyl)-D-ribulose 1-phosphate. Its pathway is amino-acid biosynthesis; L-methionine biosynthesis via salvage pathway; L-methionine from S-methyl-5-thio-alpha-D-ribose 1-phosphate: step 1/6. In terms of biological role, catalyzes the interconversion of methylthioribose-1-phosphate (MTR-1-P) into methylthioribulose-1-phosphate (MTRu-1-P). This is Methylthioribose-1-phosphate isomerase from Paramagnetospirillum magneticum (strain ATCC 700264 / AMB-1) (Magnetospirillum magneticum).